Consider the following 327-residue polypeptide: Beta-ketoacyl-[acyl-carrier-protein] synthase III 2 (327 aa).

Catalysis depends on residues Cys-114 and His-251. The interval 252 to 256 (SANLR) is ACP-binding. The active site involves Asn-281.

It belongs to the thiolase-like superfamily. FabH family. As to quaternary structure, homodimer.

Its subcellular location is the cytoplasm. It carries out the reaction malonyl-[ACP] + acetyl-CoA + H(+) = 3-oxobutanoyl-[ACP] + CO2 + CoA. The protein operates within lipid metabolism; fatty acid biosynthesis. Its function is as follows. Catalyzes the condensation reaction of fatty acid synthesis by the addition to an acyl acceptor of two carbons from malonyl-ACP. Catalyzes the first condensation reaction which initiates fatty acid synthesis and may therefore play a role in governing the total rate of fatty acid production. Possesses both acetoacetyl-ACP synthase and acetyl transacylase activities. Its substrate specificity determines the biosynthesis of branched-chain and/or straight-chain of fatty acids. This Bacillus anthracis protein is Beta-ketoacyl-[acyl-carrier-protein] synthase III 2.